The following is a 450-amino-acid chain: Probable malate:quinone oxidoreductase (450 aa).

Belongs to the MQO family. It depends on FAD as a cofactor.

The enzyme catalyses (S)-malate + a quinone = a quinol + oxaloacetate. Its pathway is carbohydrate metabolism; tricarboxylic acid cycle; oxaloacetate from (S)-malate (quinone route): step 1/1. The chain is Probable malate:quinone oxidoreductase from Helicobacter acinonychis (strain Sheeba).